The primary structure comprises 1135 residues: WASH complex subunit 4 (1135 aa).

Ala-2 bears the N-acetylalanine mark.

This sequence belongs to the SWIP family. Probable component of the WASH complex.

In Dictyostelium discoideum (Social amoeba), this protein is WASH complex subunit 4.